The chain runs to 72 residues: Multiple antibiotic resistance protein MarB (72 aa).

In Escherichia coli (strain K12), this protein is Multiple antibiotic resistance protein MarB (marB).